A 341-amino-acid polypeptide reads, in one-letter code: Tetraacyldisaccharide 4'-kinase (341 aa).

Position 57 to 64 (57 to 64 (TVGGTGKT)) interacts with ATP.

The protein belongs to the LpxK family.

It carries out the reaction a lipid A disaccharide + ATP = a lipid IVA + ADP + H(+). It participates in glycolipid biosynthesis; lipid IV(A) biosynthesis; lipid IV(A) from (3R)-3-hydroxytetradecanoyl-[acyl-carrier-protein] and UDP-N-acetyl-alpha-D-glucosamine: step 6/6. Transfers the gamma-phosphate of ATP to the 4'-position of a tetraacyldisaccharide 1-phosphate intermediate (termed DS-1-P) to form tetraacyldisaccharide 1,4'-bis-phosphate (lipid IVA). The polypeptide is Tetraacyldisaccharide 4'-kinase (Maricaulis maris (strain MCS10) (Caulobacter maris)).